Here is a 124-residue protein sequence, read N- to C-terminus: LOB domain-containing protein 9 (124 aa).

The 103-residue stretch at 11–113 (APCALCTTKN…IYLNELKEKI (103 aa)) folds into the LOB domain.

Belongs to the LOB domain-containing protein family.

The sequence is that of LOB domain-containing protein 9 (LBD9) from Arabidopsis thaliana (Mouse-ear cress).